The chain runs to 492 residues: MAKFIMVVGTSSNSGKTVLVSGICRMLSNKGYKVAPFKSQNMSLNSRVSIEDGEIAVAQYTQAMAARAEPSVHFNPILLKPKGNFISQVIVHGTPYEDRDYNEYRSNKDDMLEKIKESIDYLDTNYDYVVIEGAGSCCEINLLKDDIANLRIAEISGADAILVSDIDRGGVFAAIYGTVQLLPENWRKLLKGFVINKFRGNIDVLKDGFEKIEELTNIPVIGTIPYDETLILPEEDSQALEGKRVFGNLKSPIEVNIVKFSKIANFTDVDPLSSDCLMRYLDFNDDITGDILILPGTRCSTVEMDLMKKHGMDKKIMEFIERGGIILGICGGYQTLGKMLIDENFSEGDVGTISGLGLFDMETTFGNKKAIKNSTGKISIFDQNFDVAGYELHEGYSVSNETPLISLSRGFGNCGNSYDGSFKVVGNSYIFGTYFHGILENFEFRNYLVNIVNNRKNLSKIENDNYAEIFNKNMDKLSKLIEESLDLSKIIK.

The GATase cobBQ-type domain maps to 252–444 (PIEVNIVKFS…FHGILENFEF (193 aa)). Cys330 serves as the catalytic Nucleophile. His436 is a catalytic residue.

This sequence belongs to the CobB/CobQ family. CobQ subfamily.

The protein operates within cofactor biosynthesis; adenosylcobalamin biosynthesis. Catalyzes amidations at positions B, D, E, and G on adenosylcobyrinic A,C-diamide. NH(2) groups are provided by glutamine, and one molecule of ATP is hydrogenolyzed for each amidation. The polypeptide is Probable cobyric acid synthase (Methanococcus maripaludis (strain C7 / ATCC BAA-1331)).